The chain runs to 331 residues: Adenosine deaminase (331 aa).

2 residues coordinate Zn(2+): histidine 12 and histidine 14. Residues histidine 14, aspartate 16, and glycine 170 each coordinate substrate. A Zn(2+)-binding site is contributed by histidine 197. Catalysis depends on glutamate 200, which acts as the Proton donor. Residue aspartate 278 participates in Zn(2+) binding. Aspartate 279 lines the substrate pocket.

The protein belongs to the metallo-dependent hydrolases superfamily. Adenosine and AMP deaminases family. Adenosine deaminase subfamily. Zn(2+) serves as cofactor.

It catalyses the reaction adenosine + H2O + H(+) = inosine + NH4(+). The enzyme catalyses 2'-deoxyadenosine + H2O + H(+) = 2'-deoxyinosine + NH4(+). Functionally, catalyzes the hydrolytic deamination of adenosine and 2-deoxyadenosine. The sequence is that of Adenosine deaminase from Shewanella oneidensis (strain ATCC 700550 / JCM 31522 / CIP 106686 / LMG 19005 / NCIMB 14063 / MR-1).